Here is a 338-residue protein sequence, read N- to C-terminus: 3 beta-hydroxysteroid dehydrogenase type 7 (338 aa).

Y159 (proton acceptor) is an active-site residue. NAD(+) is bound at residue K163. 2 consecutive transmembrane segments (helical) span residues 258-278 (LLPY…QWLL) and 280-300 (PLVL…NTTF).

The protein belongs to the 3-beta-HSD family. In terms of tissue distribution, high levels in liver and lung, moderate levels in spleen, brain, heart, kidney, jejunum and testis. Up-regulated in 3Y1 cells upon growth arrest.

It localises to the endoplasmic reticulum membrane. The enzyme catalyses 7alpha-hydroxycholesterol + NAD(+) = 7alpha-hydroxycholest-4-en-3-one + NADH + H(+). It carries out the reaction 7alpha,25-dihydroxycholesterol + NAD(+) = 7alpha,25-dihydroxy-4-cholesten-3-one + NADH + H(+). The catalysed reaction is (25R)-cholest-5-en-3beta,7alpha,26-triol + NAD(+) = (25R)-7alpha,26-dihydroxycholest-4-en-3-one + NADH + H(+). It catalyses the reaction (24S)-7alpha-dihydroxycholesterol + NAD(+) = (24S)-7alpha,24-dihydroxycholest-4-en-3-one + NADH + H(+). It participates in lipid metabolism; steroid biosynthesis. The 3-beta-HSD enzymatic system plays a crucial role in the biosynthesis of all classes of hormonal steroids. HSD VII is active against four 7-alpha-hydroxylated sterols. Does not metabolize several different C(19/21) steroids as substrates. Involved in bile acid synthesis. Plays a key role in cell positioning and movement in lymphoid tissues by mediating degradation of 7-alpha,25-dihydroxycholesterol (7-alpha,25-OHC): 7-alpha,25-OHC acts as a ligand for the G protein-coupled receptor GPR183/EBI2, a chemotactic receptor for a number of lymphoid cells. The protein is 3 beta-hydroxysteroid dehydrogenase type 7 of Rattus norvegicus (Rat).